The following is a 113-amino-acid chain: Iron-sulfur cluster insertion protein ErpA (113 aa).

Iron-sulfur cluster is bound by residues Cys-41, Cys-105, and Cys-107.

It belongs to the HesB/IscA family. As to quaternary structure, homodimer. Requires iron-sulfur cluster as cofactor.

In terms of biological role, required for insertion of 4Fe-4S clusters for at least IspG. This is Iron-sulfur cluster insertion protein ErpA from Histophilus somni (strain 2336) (Haemophilus somnus).